The following is a 1138-amino-acid chain: Myelin regulatory factor (1138 aa).

The Cytoplasmic portion of the chain corresponds to 1-768 (MEVVDETEAL…CISQRFLQGT (768 aa)). Disordered stretches follow at residues 56–150 (TASF…YSPQ), 171–200 (VSSR…HYPV), 246–267 (AELP…NTLN), and 279–339 (PGTV…SDSL). Residues 67–88 (PGSSGLHHLSPPGSGPSPGRHG) are compositionally biased toward low complexity. Residue Lys-123 is modified to N6-acetyllysine. A compositionally biased stretch (pro residues) spans 178 to 198 (PPPPPAHLPGPPPPPPPPPHY). The segment at residues 250–541 (PHPSKKRKHS…SNPGQFESDS (292 aa)) is a DNA-binding region (NDT80). A Nuclear localization signal motif is present at residues 254–257 (KKRK). The segment covering 286–302 (PPHPARAPSPPWPPQGP) has biased composition (pro residues). Residues 329–339 (SPGLLQDSDSL) show a composition bias toward low complexity. The Nuclear localization signal signature appears at 491–494 (KKGK). Positions 587-696 (SDLRAKEHVQ…KLTDNLETRI (110 aa)) constitute a Peptidase S74 domain. Residues 680–711 (GAVKELCKLTDNLETRIDELERWSHKLAKLRR) are a coiled coil. The span at 721–733 (SGAFSHAGSQFSR) shows a compositional bias: polar residues. The tract at residues 721-753 (SGAFSHAGSQFSRAGSVPHKKRPPKLANKSSPA) is disordered. The tract at residues 765–1003 (LQGTIIALVV…QGQLDPAPSL (239 aa)) is required for interaction with TMEM98. A helical transmembrane segment spans residues 769 to 789 (IIALVVVMAFSVVSMSTLYVL). The Lumenal segment spans residues 790–1138 (SLRSEEDLVD…YYFHFYRLCD (349 aa)). Positions 891-900 (ATDPALGPTL) are enriched in low complexity. Disordered stretches follow at residues 891-922 (ATDP…APLP) and 951-999 (ASPV…QLDP). 2 stretches are compositionally biased toward polar residues: residues 961 to 974 (QSKT…NLQS) and 987 to 999 (PAQF…QLDP). 3 N-linked (GlcNAc...) asparagine glycosylation sites follow: Asn-1030, Asn-1052, and Asn-1116.

It belongs to the MRF family. Homotrimer. Interacts (via C-terminal region) with TMEM98; the interaction inhibits MYRF self-cleavage. In terms of processing, glycosylated. Post-translationally, follows autocatalytic cleavage via the peptidase S74 domain. Autoprocessing is apparently constitutive and is essential for transcriptional activity. Autocatalytic cleavage is inhibited by interaction with TMEM98. Specifically expressed by postmitotic oligodendrocytes in the CNS. Not detected in the peripheral nervous system (PNS).

The protein localises to the endoplasmic reticulum membrane. It localises to the nucleus. The protein resides in the cytoplasm. Constitutes a precursor of the transcription factor. Mediates the autocatalytic cleavage that releases the Myelin regulatory factor, N-terminal component that specifically activates transcription of central nervous system (CNS) myelin genes. In terms of biological role, membrane-bound part that has no transcription factor activity and remains attached to the endoplasmic reticulum membrane following cleavage. Functionally, transcription factor that specifically activates expression of myelin genes such as MBP, MOG, MAG, DUSP15 and PLP1 during oligodendrocyte (OL) maturation, thereby playing a central role in oligodendrocyte maturation and CNS myelination. Specifically recognizes and binds DNA sequence 5'-CTGGYAC-3' in the regulatory regions of myelin-specific genes and directly activates their expression. Not only required during oligodendrocyte differentiation but is also required on an ongoing basis for the maintenance of expression of myelin genes and for the maintenance of a mature, viable oligodendrocyte phenotype. This is Myelin regulatory factor (Myrf) from Mus musculus (Mouse).